The following is a 245-amino-acid chain: Pyridoxine 5'-phosphate synthase (245 aa).

Residue N7 participates in 3-amino-2-oxopropyl phosphate binding. 9 to 10 (DH) contacts 1-deoxy-D-xylulose 5-phosphate. A 3-amino-2-oxopropyl phosphate-binding site is contributed by R18. The active-site Proton acceptor is the H43. Positions 45 and 50 each coordinate 1-deoxy-D-xylulose 5-phosphate. The active-site Proton acceptor is the E70. T100 contacts 1-deoxy-D-xylulose 5-phosphate. Residue H190 is the Proton donor of the active site. 3-amino-2-oxopropyl phosphate is bound by residues G191 and 212-213 (GH).

The protein belongs to the PNP synthase family. As to quaternary structure, homooctamer; tetramer of dimers.

It localises to the cytoplasm. It carries out the reaction 3-amino-2-oxopropyl phosphate + 1-deoxy-D-xylulose 5-phosphate = pyridoxine 5'-phosphate + phosphate + 2 H2O + H(+). The protein operates within cofactor biosynthesis; pyridoxine 5'-phosphate biosynthesis; pyridoxine 5'-phosphate from D-erythrose 4-phosphate: step 5/5. Functionally, catalyzes the complicated ring closure reaction between the two acyclic compounds 1-deoxy-D-xylulose-5-phosphate (DXP) and 3-amino-2-oxopropyl phosphate (1-amino-acetone-3-phosphate or AAP) to form pyridoxine 5'-phosphate (PNP) and inorganic phosphate. In Prochlorococcus marinus (strain MIT 9303), this protein is Pyridoxine 5'-phosphate synthase.